The primary structure comprises 196 residues: Rac-like GTP-binding protein RAC13 (196 aa).

13–20 (GDGAVGKT) provides a ligand contact to GTP. Residues 35 to 43 (YVPTVFDNF) carry the Effector region motif. Residues 60 to 64 (DTAGQ) and 118 to 121 (TKLD) contribute to the GTP site. Cysteine methyl ester is present on cysteine 193. A lipid anchor (S-geranylgeranyl cysteine) is attached at cysteine 193. Positions 194-196 (AFL) are cleaved as a propeptide — removed in mature form.

Belongs to the small GTPase superfamily. Rho family.

It localises to the cytoplasm. Its subcellular location is the membrane. Could participate in a signal transduction pathway that controls cytoskeletal organization. Functionally, inactive GDP-bound Rho GTPases reside in the cytosol, are found in a complex with Rho GDP-dissociation inhibitors (Rho GDIs), and are released from the GDI protein in order to translocate to membranes upon activation. The chain is Rac-like GTP-binding protein RAC13 (RAC13) from Gossypium hirsutum (Upland cotton).